A 293-amino-acid chain; its full sequence is 4-diphosphocytidyl-2-C-methyl-D-erythritol kinase (293 aa).

The active site involves Lys-16. Pro-99–Ser-109 provides a ligand contact to ATP. The active site involves Asp-141.

The protein belongs to the GHMP kinase family. IspE subfamily.

The catalysed reaction is 4-CDP-2-C-methyl-D-erythritol + ATP = 4-CDP-2-C-methyl-D-erythritol 2-phosphate + ADP + H(+). Its pathway is isoprenoid biosynthesis; isopentenyl diphosphate biosynthesis via DXP pathway; isopentenyl diphosphate from 1-deoxy-D-xylulose 5-phosphate: step 3/6. Its function is as follows. Catalyzes the phosphorylation of the position 2 hydroxy group of 4-diphosphocytidyl-2C-methyl-D-erythritol. This Paraburkholderia phymatum (strain DSM 17167 / CIP 108236 / LMG 21445 / STM815) (Burkholderia phymatum) protein is 4-diphosphocytidyl-2-C-methyl-D-erythritol kinase.